We begin with the raw amino-acid sequence, 126 residues long: Desulfoferrodoxin (126 aa).

The Fe cation site is built by C10, C13, C29, C30, H49, H69, H75, C116, and H119.

It belongs to the desulfoferrodoxin family. In terms of assembly, homodimer. It depends on Fe(3+) as a cofactor. Cu(2+) is required as a cofactor.

It carries out the reaction reduced [rubredoxin] + superoxide + 2 H(+) = oxidized [rubredoxin] + H2O2. Its function is as follows. Catalyzes the one-electron reduction of superoxide anion radical to hydrogen peroxide at a nonheme ferrous iron center. Plays a fundamental role in case of oxidative stress via its superoxide detoxification activity. The chain is Desulfoferrodoxin (dfx) from Syntrophotalea carbinolica (strain DSM 2380 / NBRC 103641 / GraBd1) (Pelobacter carbinolicus).